The following is a 211-amino-acid chain: Probable GTP-binding protein EngB (211 aa).

The 175-residue stretch at 26–200 folds into the EngB-type G domain; sequence SGIEVAFAGR…RQKLDNWFST (175 aa). GTP-binding positions include 34–41, 61–65, 79–82, 146–149, and 179–181; these read GRSNAGKS, GRTQL, DLPG, TKAD, and FSS. The Mg(2+) site is built by Ser-41 and Thr-63.

The protein belongs to the TRAFAC class TrmE-Era-EngA-EngB-Septin-like GTPase superfamily. EngB GTPase family. It depends on Mg(2+) as a cofactor.

Functionally, necessary for normal cell division and for the maintenance of normal septation. The protein is Probable GTP-binding protein EngB of Pectobacterium carotovorum subsp. carotovorum (strain PC1).